The chain runs to 1011 residues: Cell division cycle-associated protein 2 (1011 aa).

A compositionally biased stretch (polar residues) spans 1–22; the sequence is MDTCSQESEPLQTKESPINNAG. A disordered region spans residues 1 to 26; it reads MDTCSQESEPLQTKESPINNAGKTPL. Residues Ser125, Ser130, Ser209, Ser293, and Ser310 each carry the phosphoserine modification. The residue at position 313 (Thr313) is a Phosphothreonine. Residues 380-440 enclose the PP1-binding domain; that stretch reads KRKRVTFGED…PEWLPQPNFD (61 aa). Phosphoserine is present on residues Ser391 and Ser398. 2 disordered regions span residues 395-438 and 522-544; these read LDES…PQPN and PCKEKKTNRRKSQESKHADKVLP. Thr403 carries the phosphothreonine modification. Residues 418-431 show a composition bias toward low complexity; it reads SSLSPPLLEQSPVP. At Ser428 the chain carries Phosphoserine. Over residues 522-543 the composition is skewed to basic and acidic residues; sequence PCKEKKTNRRKSQESKHADKVL. Ser583, Ser702, and Ser747 each carry phosphoserine. Lys753 participates in a covalent cross-link: Glycyl lysine isopeptide (Lys-Gly) (interchain with G-Cter in SUMO2). A compositionally biased stretch (basic and acidic residues) spans 790-803; that stretch reads DQRKVSKSQGEDLG. Disordered regions lie at residues 790–835 and 896–1011; these read DQRK…GLHL and GLVW…LSEN. Positions 931 to 945 are enriched in polar residues; it reads SSRQDPCTLPSTSSE. Position 967 is a phosphoserine (Ser967). Over residues 968 to 983 the composition is skewed to polar residues; the sequence is FCTSTLANPKSTTQSR. Basic and acidic residues predominate over residues 993 to 1011; sequence QKRENTLQETSRESDLSEN.

As to quaternary structure, interacts with PPP1CC. In terms of processing, phosphorylated by CDK1. May regulate its subcellular location.

Its subcellular location is the nucleus. In terms of biological role, regulator of chromosome structure during mitosis required for condensin-depleted chromosomes to retain their compact architecture through anaphase. Acts by mediating the recruitment of phopsphatase PP1-gamma subunit (PPP1CC) to chromatin at anaphase and into the following interphase. At anaphase onset, its association with chromatin targets a pool of PPP1CC to dephosphorylate substrates. The protein is Cell division cycle-associated protein 2 (CDCA2) of Bos taurus (Bovine).